The sequence spans 265 residues: Imidazole glycerol phosphate synthase subunit HisF (265 aa).

Residues Asp-12 and Asp-131 contribute to the active site.

It belongs to the HisA/HisF family. As to quaternary structure, heterodimer of HisH and HisF.

The protein resides in the cytoplasm. It catalyses the reaction 5-[(5-phospho-1-deoxy-D-ribulos-1-ylimino)methylamino]-1-(5-phospho-beta-D-ribosyl)imidazole-4-carboxamide + L-glutamine = D-erythro-1-(imidazol-4-yl)glycerol 3-phosphate + 5-amino-1-(5-phospho-beta-D-ribosyl)imidazole-4-carboxamide + L-glutamate + H(+). Its pathway is amino-acid biosynthesis; L-histidine biosynthesis; L-histidine from 5-phospho-alpha-D-ribose 1-diphosphate: step 5/9. IGPS catalyzes the conversion of PRFAR and glutamine to IGP, AICAR and glutamate. The HisF subunit catalyzes the cyclization activity that produces IGP and AICAR from PRFAR using the ammonia provided by the HisH subunit. The polypeptide is Imidazole glycerol phosphate synthase subunit HisF (Alkalilimnicola ehrlichii (strain ATCC BAA-1101 / DSM 17681 / MLHE-1)).